A 177-amino-acid chain; its full sequence is MSRIGKKPVQVPAGVTASVDGQKVTAKGPKGELFFVANDEVSVKLENNAVVVQPLNESKDARAKWGMSRTMVENIFKGVKDGYERKLEINGVGYRASMQGKNLQLALGFSHDVVYQTPEGITIAVPKPTEIVVSGINKQQVGQVAAEIREYRGPEPYKGKGVKYAGERIVRKEGKKK.

Belongs to the universal ribosomal protein uL6 family. In terms of assembly, part of the 50S ribosomal subunit.

Its function is as follows. This protein binds to the 23S rRNA, and is important in its secondary structure. It is located near the subunit interface in the base of the L7/L12 stalk, and near the tRNA binding site of the peptidyltransferase center. The protein is Large ribosomal subunit protein uL6 of Sinorhizobium fredii (strain NBRC 101917 / NGR234).